Here is a 244-residue protein sequence, read N- to C-terminus: Cysteine-rich secretory protein 1 (244 aa).

A signal peptide spans methionine 1–leucine 19. Positions serine 44–tyrosine 170 constitute an SCP domain. An N-linked (GlcNAc...) asparagine glycan is attached at asparagine 145. 5 disulfide bridges follow: cysteine 190–cysteine 197, cysteine 193–cysteine 202, cysteine 206–cysteine 239, cysteine 215–cysteine 233, and cysteine 224–cysteine 237. The ShKT domain maps to cysteine 206–cysteine 239.

The protein belongs to the CRISP family. In terms of tissue distribution, mainly found in the cauda epididymis where it is synthesized by the principal cells and secreted into the lumen. Binds to the heads of spermatozoa. Also expressed in the submandibular gland.

It is found in the cytoplasmic vesicle. The protein resides in the secretory vesicle. In terms of biological role, this protein is supposed to help spermatozoa undergo functional maturation while they move from the testis to the ductus deferens. This Mus musculus (Mouse) protein is Cysteine-rich secretory protein 1 (Crisp1).